The primary structure comprises 173 residues: Crossover junction endodeoxyribonuclease RuvC (173 aa).

Residues Asp11, Glu71, and Asp143 contribute to the active site. Residues Asp11, Glu71, and Asp143 each coordinate Mg(2+).

The protein belongs to the RuvC family. As to quaternary structure, homodimer which binds Holliday junction (HJ) DNA. The HJ becomes 2-fold symmetrical on binding to RuvC with unstacked arms; it has a different conformation from HJ DNA in complex with RuvA. In the full resolvosome a probable DNA-RuvA(4)-RuvB(12)-RuvC(2) complex forms which resolves the HJ. Mg(2+) serves as cofactor.

It localises to the cytoplasm. The catalysed reaction is Endonucleolytic cleavage at a junction such as a reciprocal single-stranded crossover between two homologous DNA duplexes (Holliday junction).. In terms of biological role, the RuvA-RuvB-RuvC complex processes Holliday junction (HJ) DNA during genetic recombination and DNA repair. Endonuclease that resolves HJ intermediates. Cleaves cruciform DNA by making single-stranded nicks across the HJ at symmetrical positions within the homologous arms, yielding a 5'-phosphate and a 3'-hydroxyl group; requires a central core of homology in the junction. The consensus cleavage sequence is 5'-(A/T)TT(C/G)-3'. Cleavage occurs on the 3'-side of the TT dinucleotide at the point of strand exchange. HJ branch migration catalyzed by RuvA-RuvB allows RuvC to scan DNA until it finds its consensus sequence, where it cleaves and resolves the cruciform DNA. This is Crossover junction endodeoxyribonuclease RuvC from Brucella suis (strain ATCC 23445 / NCTC 10510).